Consider the following 356-residue polypeptide: Tyrosine recombinase XerS (356 aa).

In terms of domain architecture, Core-binding (CB) spans 16–121 (LMPWYVLEYY…ALSSLYKYLT (106 aa)). Residues 169 to 354 (GFLTYIDQEH…VSDEQKNALD (186 aa)) form the Tyr recombinase domain. Residues R210, K234, H306, R309, and H332 contribute to the active site. The active-site O-(3'-phospho-DNA)-tyrosine intermediate is Y341.

Belongs to the 'phage' integrase family. XerS subfamily.

The protein resides in the cytoplasm. FtsK is required for recombination. Its function is as follows. Site-specific tyrosine recombinase, which acts by catalyzing the cutting and rejoining of the recombining DNA molecules. Essential to convert dimers of the bacterial chromosome into monomers to permit their segregation at cell division. The sequence is that of Tyrosine recombinase XerS from Streptococcus pneumoniae serotype 4 (strain ATCC BAA-334 / TIGR4).